We begin with the raw amino-acid sequence, 86 residues long: Large ribosomal subunit protein bL31B (86 aa).

Belongs to the bacterial ribosomal protein bL31 family. Type B subfamily. Part of the 50S ribosomal subunit.

This Cupriavidus pinatubonensis (strain JMP 134 / LMG 1197) (Cupriavidus necator (strain JMP 134)) protein is Large ribosomal subunit protein bL31B.